The following is an 82-amino-acid chain: Small ribosomal subunit protein bS16 (82 aa).

This sequence belongs to the bacterial ribosomal protein bS16 family.

The sequence is that of Small ribosomal subunit protein bS16 from Rippkaea orientalis (strain PCC 8801 / RF-1) (Cyanothece sp. (strain PCC 8801)).